The following is a 448-amino-acid chain: MSKRAYFGTDGIRGQANKHPMTAEVALRVGLAAGKLFRSQDERRHLVVIGKDTRLSGYMIEPALVAGLTSVGLDVRLFGPLPTPAVAMMTRSMRADLGIMISASHNSFADNGIKLFGPDGYKLSDAQELGIEALMDQGLQEGLAAPRELGRVKRIDDAQARYVEIVKATFPRHLNLSGLRIVIDCANGAAYKVAPTALYELGAEVITLGVSPDGTNINEECGSTHPEAMAKMVREYRADIGIALDGDADRLVICDEKGVVVDGDQIMAIIAAASHKAGTLKGGGVVATVMSNLGLERQLNTMGLSLERTAVGDRYVMQRMREGGFNVGGEQSGHLILSDFSTTGDGLIAALQVLAVMVETDKPMSALGRQFEPVPQLLENVRFVGGKPLEAAAVKEAIADGEAQLNGAGRIVVRASGTEPLIRIMAEGDDPALVKKVVKSIASAVKAA.

The active-site Phosphoserine intermediate is serine 104. Serine 104, aspartate 245, aspartate 247, and aspartate 249 together coordinate Mg(2+). Serine 104 carries the post-translational modification Phosphoserine.

The protein belongs to the phosphohexose mutase family. Requires Mg(2+) as cofactor. In terms of processing, activated by phosphorylation.

It catalyses the reaction alpha-D-glucosamine 1-phosphate = D-glucosamine 6-phosphate. Its function is as follows. Catalyzes the conversion of glucosamine-6-phosphate to glucosamine-1-phosphate. This Caulobacter vibrioides (strain ATCC 19089 / CIP 103742 / CB 15) (Caulobacter crescentus) protein is Phosphoglucosamine mutase.